Reading from the N-terminus, the 283-residue chain is Phosphate import ATP-binding protein PstB 2 (283 aa).

The 243-residue stretch at 36-278 folds into the ABC transporter domain; it reads LQVKQFNFYY…PKKKQTEDYI (243 aa). 69 to 76 is an ATP binding site; that stretch reads GPSGCGKS.

Belongs to the ABC transporter superfamily. Phosphate importer (TC 3.A.1.7) family. In terms of assembly, the complex is composed of two ATP-binding proteins (PstB), two transmembrane proteins (PstC and PstA) and a solute-binding protein (PstS).

Its subcellular location is the cell inner membrane. The catalysed reaction is phosphate(out) + ATP + H2O = ADP + 2 phosphate(in) + H(+). In terms of biological role, part of the ABC transporter complex PstSACB involved in phosphate import. Responsible for energy coupling to the transport system. The sequence is that of Phosphate import ATP-binding protein PstB 2 from Nitrosococcus oceani (strain ATCC 19707 / BCRC 17464 / JCM 30415 / NCIMB 11848 / C-107).